A 123-amino-acid chain; its full sequence is Large ribosomal subunit protein bL19c (123 aa).

The protein belongs to the bacterial ribosomal protein bL19 family.

It is found in the plastid. The protein localises to the chloroplast. This is Large ribosomal subunit protein bL19c from Pyropia yezoensis (Susabi-nori).